The following is a 435-amino-acid chain: Methylenetetrahydrofolate--tRNA-(uracil-5-)-methyltransferase TrmFO (435 aa).

FAD is bound at residue 7-12 (GAGLAG).

The protein belongs to the MnmG family. TrmFO subfamily. Requires FAD as cofactor.

The protein localises to the cytoplasm. It catalyses the reaction uridine(54) in tRNA + (6R)-5,10-methylene-5,6,7,8-tetrahydrofolate + NADH + H(+) = 5-methyluridine(54) in tRNA + (6S)-5,6,7,8-tetrahydrofolate + NAD(+). It carries out the reaction uridine(54) in tRNA + (6R)-5,10-methylene-5,6,7,8-tetrahydrofolate + NADPH + H(+) = 5-methyluridine(54) in tRNA + (6S)-5,6,7,8-tetrahydrofolate + NADP(+). Its function is as follows. Catalyzes the folate-dependent formation of 5-methyl-uridine at position 54 (M-5-U54) in all tRNAs. The sequence is that of Methylenetetrahydrofolate--tRNA-(uracil-5-)-methyltransferase TrmFO from Thermotoga petrophila (strain ATCC BAA-488 / DSM 13995 / JCM 10881 / RKU-1).